A 392-amino-acid polypeptide reads, in one-letter code: Phospho-N-acetylmuramoyl-pentapeptide-transferase (392 aa).

The next 11 membrane-spanning stretches (helical) occupy residues 24–44 (YLTLRAVMAALTALLIGLIAG), 76–96 (TMGGVLILGSIAISTLLWFDL), 100–120 (FVWIVLAVTLGFGAIGWVDDW), 137–157 (YFWQSVIGLLAALYLVFSISE), 167–187 (FITWVQSGFLMDLPPKAGLLV), 193–213 (VSYPLGVLGFVILTYLVIVGS), 225–245 (GLAIMPVIMVGASLGIFAYVT), 262–282 (SGELLIFCAAMAGAGLAFLWF), 289–309 (VFMGDVGALALGAALGTIAVI), 314–334 (IVLAIMGGIFVVEALSVMLQV), and 369–389 (QVVVRFWIITMLLCLVGLTTL).

It belongs to the glycosyltransferase 4 family. MraY subfamily. Requires Mg(2+) as cofactor.

The protein resides in the cell inner membrane. It catalyses the reaction UDP-N-acetyl-alpha-D-muramoyl-L-alanyl-gamma-D-glutamyl-meso-2,6-diaminopimeloyl-D-alanyl-D-alanine + di-trans,octa-cis-undecaprenyl phosphate = di-trans,octa-cis-undecaprenyl diphospho-N-acetyl-alpha-D-muramoyl-L-alanyl-D-glutamyl-meso-2,6-diaminopimeloyl-D-alanyl-D-alanine + UMP. It participates in cell wall biogenesis; peptidoglycan biosynthesis. In terms of biological role, catalyzes the initial step of the lipid cycle reactions in the biosynthesis of the cell wall peptidoglycan: transfers peptidoglycan precursor phospho-MurNAc-pentapeptide from UDP-MurNAc-pentapeptide onto the lipid carrier undecaprenyl phosphate, yielding undecaprenyl-pyrophosphoryl-MurNAc-pentapeptide, known as lipid I. This chain is Phospho-N-acetylmuramoyl-pentapeptide-transferase, found in Acidovorax ebreus (strain TPSY) (Diaphorobacter sp. (strain TPSY)).